The sequence spans 289 residues: Glucanase inhibitor protein 2 (289 aa).

Positions 1–19 (MKVTATIAAASMAIAAASA) are cleaved as a signal peptide. In terms of domain architecture, Peptidase S1 spans 29-257 (ILGGSIIPSG…ALKWVNPIIK (229 aa)). Residues C56 and C72 are joined by a disulfide bond. Residues N89, N104, and N109 are each glycosylated (N-linked (GlcNAc...) asparagine). Cystine bridges form between C180–C192 and C202–C233.

Belongs to the peptidase S1 family.

It is found in the secreted. Secreted effector that suppresses host plant glucan elicitor-mediated defense responses. Targets host endoglucanases and inhibits the endoglucanase-mediated release of elicitor-active glucan oligosaccharides from P.sojae cell walls. The polypeptide is Glucanase inhibitor protein 2 (Phytophthora sojae (Soybean stem and root rot agent)).